We begin with the raw amino-acid sequence, 856 residues long: Valine--tRNA ligase (856 aa).

Positions 47–57 match the 'HIGH' region motif; that stretch reads PTASGVLHIGH. A 'KMSKS' region motif is present at residues 578 to 582; the sequence is KMSKS. Residue K581 participates in ATP binding.

It belongs to the class-I aminoacyl-tRNA synthetase family. ValS type 2 subfamily. As to quaternary structure, monomer.

The protein localises to the cytoplasm. It carries out the reaction tRNA(Val) + L-valine + ATP = L-valyl-tRNA(Val) + AMP + diphosphate. Functionally, catalyzes the attachment of valine to tRNA(Val). As ValRS can inadvertently accommodate and process structurally similar amino acids such as threonine, to avoid such errors, it has a 'posttransfer' editing activity that hydrolyzes mischarged Thr-tRNA(Val) in a tRNA-dependent manner. This is Valine--tRNA ligase from Tropheryma whipplei (strain TW08/27) (Whipple's bacillus).